The primary structure comprises 110 residues: Phosphoribosyl-ATP pyrophosphatase (110 aa).

It belongs to the PRA-PH family.

It localises to the cytoplasm. The enzyme catalyses 1-(5-phospho-beta-D-ribosyl)-ATP + H2O = 1-(5-phospho-beta-D-ribosyl)-5'-AMP + diphosphate + H(+). It functions in the pathway amino-acid biosynthesis; L-histidine biosynthesis; L-histidine from 5-phospho-alpha-D-ribose 1-diphosphate: step 2/9. The chain is Phosphoribosyl-ATP pyrophosphatase from Pseudomonas fluorescens (strain ATCC BAA-477 / NRRL B-23932 / Pf-5).